The primary structure comprises 298 residues: Tyrosine recombinase XerC (298 aa).

The 84-residue stretch at 1-84 (MNHIQEAFLN…TLRTFYEYWM (84 aa)) folds into the Core-binding (CB) domain. The 182-residue stretch at 105 to 286 (YLPQFFYEEE…SNQQLRKVYL (182 aa)) folds into the Tyr recombinase domain. Active-site residues include Arg145, Lys169, His238, Arg241, and His264. Tyr273 (O-(3'-phospho-DNA)-tyrosine intermediate) is an active-site residue.

It belongs to the 'phage' integrase family. XerC subfamily. In terms of assembly, forms a cyclic heterotetrameric complex composed of two molecules of XerC and two molecules of XerD.

The protein resides in the cytoplasm. Its function is as follows. Site-specific tyrosine recombinase, which acts by catalyzing the cutting and rejoining of the recombining DNA molecules. The XerC-XerD complex is essential to convert dimers of the bacterial chromosome into monomers to permit their segregation at cell division. It also contributes to the segregational stability of plasmids. The polypeptide is Tyrosine recombinase XerC (Staphylococcus aureus (strain MSSA476)).